Consider the following 898-residue polypeptide: Protein SOV1, mitochondrial (898 aa).

Residues 1-31 (MFKYNRSLCSSALIAKSQIRFYRLKRAPLNY) constitute a mitochondrion transit peptide.

It localises to the mitochondrion. The chain is Protein SOV1, mitochondrial (SOV1) from Saccharomyces cerevisiae (strain ATCC 204508 / S288c) (Baker's yeast).